A 684-amino-acid polypeptide reads, in one-letter code: Dipeptidyl-peptidase 5 (684 aa).

A signal peptide spans 1–24 (MNKKIFSMMAASIIGSAAMTPSAG). WD repeat units lie at residues 87–127 (DTES…TERR), 220–259 (KPWS…DIYI), and 323–363 (TFDY…GKIR). Active-site charge relay system residues include serine 542, aspartate 627, and histidine 659.

This sequence belongs to the peptidase S9C family. As to quaternary structure, homodimer.

The protein localises to the periplasm. Its function is as follows. Catalyzes the removal of dipeptides from the N-terminus of oligopeptides. Prefers Ala and hydrophobic residues except Pro at the P1 position, and has no preference for P2 residues. Shows high dipeptidyl peptidase activity toward the synthetic substrates Lys-Ala-, Gly-Phe-, Met-Leu-, and Ser-Tyr-methylcoumaryl-7-amide (MCA), and slowly hydrolyzes Val-Tyr-MCA. Is likely involved in amino acid metabolism and bacterial growth of asaccharolytic P.gingivalis, that utilizes amino acids from extracellular proteinaceous nutrients as energy and carbon sources. This Porphyromonas gingivalis (strain ATCC 33277 / DSM 20709 / CIP 103683 / JCM 12257 / NCTC 11834 / 2561) protein is Dipeptidyl-peptidase 5.